A 349-amino-acid polypeptide reads, in one-letter code: Inhibitor of nuclear factor kappa-B kinase-interacting protein (349 aa).

The span at 1–11 shows a compositional bias: basic residues; it reads MSEVKSRKKSG. The segment at 1-39 is disordered; that stretch reads MSEVKSRKKSGTKGAPAEPGKRNEGGKSPEARGGGGRGW. The span at 19-30 shows a compositional bias: basic and acidic residues; it reads PGKRNEGGKSPE. Residues 45–61 traverse the membrane as a helical segment; it reads GVSLLSLGTCLGLAWFV. A glycan (N-linked (GlcNAc...) asparagine) is linked at Asn-145. Coiled coils occupy residues 183–216 and 304–347; these read GLVTDVTSLTDSVQELENKIEKVEKNTVKNIGDL and IGRL…HISD. An N-linked (GlcNAc...) asparagine glycan is attached at Asn-327.

Post-translationally, N-glycosylated.

The protein resides in the endoplasmic reticulum membrane. In terms of biological role, target of p53/TP53 with pro-apoptotic function. This chain is Inhibitor of nuclear factor kappa-B kinase-interacting protein (IKBIP), found in Bos taurus (Bovine).